The chain runs to 219 residues: Phosphatidylserine decarboxylase proenzyme (219 aa).

Catalysis depends on serine 182, which acts as the Schiff-base intermediate with substrate; via pyruvic acid. The residue at position 182 (serine 182) is a Pyruvic acid (Ser); by autocatalysis.

Belongs to the phosphatidylserine decarboxylase family. PSD-A subfamily. In terms of assembly, heterodimer of a large membrane-associated beta subunit and a small pyruvoyl-containing alpha subunit. Pyruvate serves as cofactor. In terms of processing, is synthesized initially as an inactive proenzyme. Formation of the active enzyme involves a self-maturation process in which the active site pyruvoyl group is generated from an internal serine residue via an autocatalytic post-translational modification. Two non-identical subunits are generated from the proenzyme in this reaction, and the pyruvate is formed at the N-terminus of the alpha chain, which is derived from the carboxyl end of the proenzyme. The post-translation cleavage follows an unusual pathway, termed non-hydrolytic serinolysis, in which the side chain hydroxyl group of the serine supplies its oxygen atom to form the C-terminus of the beta chain, while the remainder of the serine residue undergoes an oxidative deamination to produce ammonia and the pyruvoyl prosthetic group on the alpha chain.

The protein resides in the cell membrane. It catalyses the reaction a 1,2-diacyl-sn-glycero-3-phospho-L-serine + H(+) = a 1,2-diacyl-sn-glycero-3-phosphoethanolamine + CO2. The protein operates within phospholipid metabolism; phosphatidylethanolamine biosynthesis; phosphatidylethanolamine from CDP-diacylglycerol: step 2/2. Catalyzes the formation of phosphatidylethanolamine (PtdEtn) from phosphatidylserine (PtdSer). The protein is Phosphatidylserine decarboxylase proenzyme of Chlorobium phaeovibrioides (strain DSM 265 / 1930) (Prosthecochloris vibrioformis (strain DSM 265)).